We begin with the raw amino-acid sequence, 625 residues long: Protein LEO1 homolog (625 aa).

Disordered stretches follow at residues 1–214 and 415–625; these read MVKG…DMVL and EREK…SDED. Composition is skewed to acidic residues over residues 40–55 and 63–80; these read DEAE…GEAE and EAES…PGES. Basic and acidic residues-rich tracts occupy residues 97 to 113, 121 to 137, and 182 to 197; these read SEAR…EHGG, QEVV…KHYE, and EYVR…RSPI. The residue at position 203 (Ser-203) is a Phosphoserine. Over residues 415 to 425 the composition is skewed to basic and acidic residues; it reads EREKEKREKAE. The stretch at 415 to 539 forms a coiled coil; it reads EREKEKREKA…ETEEEEEEKS (125 aa). Polar residues predominate over residues 426–436; sequence SQNLKASTKLS. Residues 471–491 show a composition bias toward basic and acidic residues; it reads YRSNRGYEEDLEAEAQRERRI. The segment covering 492-501 has biased composition (basic residues); it reads LNAKKSHKGI. Over residues 523–537 the composition is skewed to acidic residues; it reads EREESEYETEEEEEE. The span at 538 to 547 shows a compositional bias: basic and acidic residues; sequence KSPARGRGKD. 5 positions are modified to phosphoserine: Ser-548, Ser-570, Ser-600, Ser-605, and Ser-622. The segment covering 548-561 has biased composition (acidic residues); the sequence is SEDEYEEDAEEDEE.

It belongs to the LEO1 family. In terms of assembly, component of the nuclear PAF1 complex (PAF1C), which consists of VIP2/ELF7/PAF1, VIP3/SKI8/WDR61, VIP4/LEO1, VIP5/RTF1, VIP6/ELF8/CTR9 and CDC73. Interacts with VIP3 and VIP6. Expressed in roots, shoot apices, stems, cauline leaves, inflorescence apices and flowers.

It is found in the nucleus. Its function is as follows. Component of the PAF1 complex (PAF1C) which is involved in histone modifications such as methylation on histone H3 'Lys-4' (H3K4me3). Involved in regulation of flowering time. Required for the expression of the flowering repressor and MADS box gene FLC. Involved in the control of seed dormancy and germination. This is Protein LEO1 homolog from Arabidopsis thaliana (Mouse-ear cress).